Reading from the N-terminus, the 693-residue chain is Sulfite reductase 1 [ferredoxin], chloroplastic (693 aa).

The N-terminal 62 residues, 1-62, are a transit peptide targeting the chloroplast; that stretch reads MTTSFGAAIN…PSSIVRAVST (62 aa). [4Fe-4S] cluster-binding residues include Cys502, Cys508, Cys548, and Cys552. Cys552 lines the siroheme pocket.

The protein belongs to the nitrite and sulfite reductase 4Fe-4S domain family. Monomer. Interacts with ferredoxin. The cofactor is siroheme. It depends on [4Fe-4S] cluster as a cofactor. Phosphorylated; this phosphorylation reduces DNA-binding. As to expression, expressed in leaves, stems, roots and petals.

The protein resides in the plastid. It is found in the chloroplast stroma. The protein localises to the chloroplast nucleoid. It localises to the plastid stroma. The enzyme catalyses hydrogen sulfide + 6 oxidized [2Fe-2S]-[ferredoxin] + 3 H2O = sulfite + 6 reduced [2Fe-2S]-[ferredoxin] + 7 H(+). In terms of biological role, essential protein with sulfite reductase activity required in assimilatory sulfate reduction pathway during both primary and secondary metabolism and thus involved in development and growth. Its function is as follows. DNA-binding protein that binds to both double-stranded and single-stranded DNA without significant sequence specificity to reversibly repress the transcriptional activity of chloroplast nucleoids by promoting DNA compaction and possibly regulate DNA replication. The chain is Sulfite reductase 1 [ferredoxin], chloroplastic (SIR1) from Nicotiana tabacum (Common tobacco).